A 608-amino-acid chain; its full sequence is 1-deoxy-D-xylulose-5-phosphate synthase (608 aa).

Thiamine diphosphate is bound by residues H66 and 107–109; that span reads GHA. A Mg(2+)-binding site is contributed by D138. Residues 139 to 140, N167, F277, and E350 contribute to the thiamine diphosphate site; that span reads GA. N167 serves as a coordination point for Mg(2+).

This sequence belongs to the transketolase family. DXPS subfamily. In terms of assembly, homodimer. It depends on Mg(2+) as a cofactor. Requires thiamine diphosphate as cofactor.

It carries out the reaction D-glyceraldehyde 3-phosphate + pyruvate + H(+) = 1-deoxy-D-xylulose 5-phosphate + CO2. It participates in metabolic intermediate biosynthesis; 1-deoxy-D-xylulose 5-phosphate biosynthesis; 1-deoxy-D-xylulose 5-phosphate from D-glyceraldehyde 3-phosphate and pyruvate: step 1/1. In terms of biological role, catalyzes the acyloin condensation reaction between C atoms 2 and 3 of pyruvate and glyceraldehyde 3-phosphate to yield 1-deoxy-D-xylulose-5-phosphate (DXP). The polypeptide is 1-deoxy-D-xylulose-5-phosphate synthase (Thermotoga maritima (strain ATCC 43589 / DSM 3109 / JCM 10099 / NBRC 100826 / MSB8)).